Reading from the N-terminus, the 123-residue chain is Large ribosomal subunit protein uL29 (123 aa).

Belongs to the universal ribosomal protein uL29 family. Component of the large ribosomal subunit.

The protein localises to the cytoplasm. In terms of biological role, component of the large ribosomal subunit. The ribosome is a large ribonucleoprotein complex responsible for the synthesis of proteins in the cell. Plays an essential role in early embryonic development. May act as a haploinsufficient tumor suppressor. The sequence is that of Large ribosomal subunit protein uL29 (rpl35) from Danio rerio (Zebrafish).